Consider the following 503-residue polypeptide: ATP synthase subunit beta (503 aa).

Residue 157 to 164 coordinates ATP; it reads GGAGVGKT.

This sequence belongs to the ATPase alpha/beta chains family. As to quaternary structure, F-type ATPases have 2 components, CF(1) - the catalytic core - and CF(0) - the membrane proton channel. CF(1) has five subunits: alpha(3), beta(3), gamma(1), delta(1), epsilon(1). CF(0) has three main subunits: a(1), b(2) and c(9-12). The alpha and beta chains form an alternating ring which encloses part of the gamma chain. CF(1) is attached to CF(0) by a central stalk formed by the gamma and epsilon chains, while a peripheral stalk is formed by the delta and b chains.

Its subcellular location is the cell inner membrane. It carries out the reaction ATP + H2O + 4 H(+)(in) = ADP + phosphate + 5 H(+)(out). In terms of biological role, produces ATP from ADP in the presence of a proton gradient across the membrane. The catalytic sites are hosted primarily by the beta subunits. The sequence is that of ATP synthase subunit beta from Flavobacterium psychrophilum (strain ATCC 49511 / DSM 21280 / CIP 103535 / JIP02/86).